Consider the following 366-residue polypeptide: Protein FAM110B (366 aa).

Disordered regions lie at residues 127 to 152 (SSEG…DTTD), 163 to 182 (KVYP…HVSR), and 216 to 252 (CSSS…RPSL). Residues S234 and S297 each carry the phosphoserine modification. Residues 313-333 (DCEQSQDSNSDLRNDDSANDR) are disordered. A compositionally biased stretch (basic and acidic residues) spans 322-331 (SDLRNDDSAN).

This sequence belongs to the FAM110 family.

Its subcellular location is the cytoplasm. The protein localises to the cytoskeleton. The protein resides in the microtubule organizing center. It localises to the centrosome. This chain is Protein FAM110B (Fam110b), found in Mus musculus (Mouse).